Reading from the N-terminus, the 230-residue chain is Transmembrane protein 225 (230 aa).

The Cytoplasmic portion of the chain corresponds to 1-8; that stretch reads MMHIPNRS. The helical transmembrane segment at 9–29 threads the bilayer; that stretch reads IQAANIFFSSGAILLLIVGLI. The Extracellular segment spans residues 30–71; sequence MEDWVELIPKVRKDKTTHSPWLGCCPPFWPEESLEVVRRIMR. A helical transmembrane segment spans residues 72 to 92; sequence MTLNISIYLNLIIGLQFSYMI. The Cytoplasmic portion of the chain corresponds to 93–99; the sequence is SQNKCVH. The chain crosses the membrane as a helical span at residues 100-120; the sequence is LLVGFLSFFAGCLLFYAIIVY. The Extracellular segment spans residues 121-139; that stretch reads HHKLNKGQYVYFVNYKTKW. The helical transmembrane segment at 140–160 threads the bilayer; it reads IAFTVYLTIALFLTCGIFCFI. Residues 161-230 are Cytoplasmic-facing; it reads QSTNRCECMK…TQARRVTWAL (70 aa). The RVxF signature appears at 224-228; it reads RRVTW.

As to quaternary structure, interacts (via RVxF motif) with PPP1CC. Expressed in testis, epididymis and spermatozoa (at protein level). Not expressed in brain, heart, lung, liver, spleen, kidney and skeletal muscle.

Its subcellular location is the cytoplasmic vesicle. The protein localises to the secretory vesicle. The protein resides in the acrosome membrane. Probably inhibits protein phosphatase 1 (PP1) in sperm via binding to catalytic subunit PPP1CC. The chain is Transmembrane protein 225 (Tmem225) from Mus musculus (Mouse).